We begin with the raw amino-acid sequence, 728 residues long: Glycine--tRNA ligase (728 aa).

Residues 1–32 constitute a mitochondrion transit peptide; it reads MPCLLPTLLRATRAALLLQSPRVVAAPASQRL. Residues 52–108 enclose the WHEP-TRS domain; that stretch reads LLAPLRLAVRQQGDFVRKLKEDKAPQVDVDRAVAELKARKRVLEAKELALQPKDDIV. N6-acetyllysine is present on Lys-193. Glu-288 provides a ligand contact to glycine. ATP-binding positions include 320-322 and 331-332; these read RNE and RV. Glycine is bound at residue Glu-339. Tyr-442 bears the Phosphotyrosine mark. Residue 446–447 coordinates ATP; sequence EI. The residue at position 490 (Lys-490) is an N6-acetyllysine. Residue 565–567 participates in glycine binding; it reads EPS. Arg-572 contributes to the ATP binding site. Ser-689 carries the post-translational modification Phosphoserine. Thr-725 is subject to Phosphothreonine.

Belongs to the class-II aminoacyl-tRNA synthetase family. As to quaternary structure, homodimer.

The protein resides in the cytoplasm. The protein localises to the mitochondrion. It localises to the cell projection. It is found in the axon. Its subcellular location is the secreted. The protein resides in the extracellular exosome. The catalysed reaction is tRNA(Gly) + glycine + ATP = glycyl-tRNA(Gly) + AMP + diphosphate. The enzyme catalyses 2 ATP + H(+) = P(1),P(4)-bis(5'-adenosyl) tetraphosphate + diphosphate. Its function is as follows. Catalyzes the ATP-dependent ligation of glycine to the 3'-end of its cognate tRNA, via the formation of an aminoacyl-adenylate intermediate (Gly-AMP). Also produces diadenosine tetraphosphate (Ap4A), a universal pleiotropic signaling molecule needed for cell regulation pathways, by direct condensation of 2 ATPs. Thereby, may play a special role in Ap4A homeostasis. This chain is Glycine--tRNA ligase (Gars1), found in Rattus norvegicus (Rat).